Reading from the N-terminus, the 118-residue chain is Small ribosomal subunit protein uS13 (118 aa).

The tract at residues 92-118 is disordered; that stretch reads RRGHPLRGQRTRTNARTRKGPRKAIRK.

This sequence belongs to the universal ribosomal protein uS13 family. Part of the 30S ribosomal subunit. Forms a loose heterodimer with protein S19. Forms two bridges to the 50S subunit in the 70S ribosome.

In terms of biological role, located at the top of the head of the 30S subunit, it contacts several helices of the 16S rRNA. In the 70S ribosome it contacts the 23S rRNA (bridge B1a) and protein L5 of the 50S subunit (bridge B1b), connecting the 2 subunits; these bridges are implicated in subunit movement. Contacts the tRNAs in the A and P-sites. The sequence is that of Small ribosomal subunit protein uS13 from Xanthomonas campestris pv. campestris (strain ATCC 33913 / DSM 3586 / NCPPB 528 / LMG 568 / P 25).